A 413-amino-acid polypeptide reads, in one-letter code: L-cysteine:1D-myo-inositol 2-amino-2-deoxy-alpha-D-glucopyranoside ligase (413 aa).

Cysteine 15 lines the Zn(2+) pocket. L-cysteinyl-5'-AMP is bound by residues 15–18, threonine 30, and 53–55; these read CGIT and NVT. Positions 17–27 match the 'HIGH' region motif; it reads ITPYDATHLGH. The 'ERGGDP' region signature appears at 155-160; it reads ERGGDP. An L-cysteinyl-5'-AMP-binding site is contributed by tryptophan 195. Residue cysteine 199 coordinates Zn(2+). 217-219 contacts L-cysteinyl-5'-AMP; that stretch reads GTD. Histidine 224 is a Zn(2+) binding site. An L-cysteinyl-5'-AMP-binding site is contributed by valine 251. The short motif at 257 to 261 is the 'KMSKS' region element; it reads KMSKS.

The protein belongs to the class-I aminoacyl-tRNA synthetase family. MshC subfamily. In terms of assembly, monomer. Zn(2+) is required as a cofactor.

It catalyses the reaction 1D-myo-inositol 2-amino-2-deoxy-alpha-D-glucopyranoside + L-cysteine + ATP = 1D-myo-inositol 2-(L-cysteinylamino)-2-deoxy-alpha-D-glucopyranoside + AMP + diphosphate + H(+). Catalyzes the ATP-dependent condensation of GlcN-Ins and L-cysteine to form L-Cys-GlcN-Ins. In Frankia alni (strain DSM 45986 / CECT 9034 / ACN14a), this protein is L-cysteine:1D-myo-inositol 2-amino-2-deoxy-alpha-D-glucopyranoside ligase.